Here is a 53-residue protein sequence, read N- to C-terminus: uncharacterized protein (53 aa).

Positions 14–33 (SPSSLNNNNNINSKSLQINS) are enriched in low complexity. The tract at residues 14–53 (SPSSLNNNNNINSKSLQINSENKSKIQNNNPLGNKGGVQF) is disordered.

This is an uncharacterized protein from Dictyostelium discoideum (Social amoeba).